Reading from the N-terminus, the 86-residue chain is UPF0335 protein BruAb1_1737 (86 aa).

This sequence belongs to the UPF0335 family.

The sequence is that of UPF0335 protein BruAb1_1737 from Brucella abortus biovar 1 (strain 9-941).